The primary structure comprises 174 residues: ATP synthase subunit delta, sodium ion specific (174 aa).

It belongs to the ATPase delta chain family. F-type ATPases have 2 components, F(1) - the catalytic core - and F(0) - the membrane proton channel. F(1) has five subunits: alpha(3), beta(3), gamma(1), delta(1), epsilon(1). F(0) has three main subunits: a(1), b(2) and c(10-14). The alpha and beta chains form an alternating ring which encloses part of the gamma chain. F(1) is attached to F(0) by a central stalk formed by the gamma and epsilon chains, while a peripheral stalk is formed by the delta and b chains.

The protein localises to the cell inner membrane. F(1)F(0) ATP synthase produces ATP from ADP in the presence of a proton or sodium gradient. F-type ATPases consist of two structural domains, F(1) containing the extramembraneous catalytic core and F(0) containing the membrane proton channel, linked together by a central stalk and a peripheral stalk. During catalysis, ATP synthesis in the catalytic domain of F(1) is coupled via a rotary mechanism of the central stalk subunits to proton translocation. Its function is as follows. This protein is part of the stalk that links CF(0) to CF(1). It either transmits conformational changes from CF(0) to CF(1) or is implicated in proton conduction. The chain is ATP synthase subunit delta, sodium ion specific from Ilyobacter tartaricus.